The following is a 667-amino-acid chain: MADLSSRVNELHDLLNQYSYEYYVEDNPSVPDSEYDKLLHELIKIEEEHPEYKTVDSPTVRVGGEAQASFNKVNHDTPMLSLGNAFNEDDLRKFDQRIREQIGNVEYMCELKIDGLAVSLKYVDGYFVQGLTRGDGTTGEDITENLKTIHAIPLKMKEPLNVEVRGEAYMPRRSFLRLNEEKEKNDEQLFANPRNAAAGSLRQLDSKLTAKRKLSVFIYSVNDFTDFNARSQSEALDELDKLGFTTNKNRARVNNIDGVLEYIEKWTSQRESLPYDIDGIVIKVNDLDQQDEMGFTQKSPRWAIAYKFPAEEVVTKLLDIELSIGRTGVVTPTAILEPVKVAGTTVSRASLHNEDLIHDRDIRIGDSVVVKKAGDIIPEVVRSIPERRPEDAVTYHMPTHCPSCGHELVRIEGEVALRCINPKCQAQLVEGLIHFVSRQAMNIDGLGTKIIQQLYQSELIKDVADIFYLTEEDLLPLDRMGQKKVDNLLAAIQQAKDNSLENLLFGLGIRHLGVKASQVLAEKYETIDRLLTVTEAELVEIHDIGDKVAQSVVTYLENEDIRALIQKLKDKHVNMIYKGIKTSDIEGHPEFSGKTIVLTGKLHQMTRNEASKWLASQGAKVTSSVTKNTDVVIAGEDAGSKLTKAQSLGIEIWTEQQFVDKQNELNS.

NAD(+) is bound by residues 32-36, 81-82, and Glu110; these read DSEYD and SL. Lys112 acts as the N6-AMP-lysine intermediate in catalysis. NAD(+) contacts are provided by Arg133, Glu167, Lys283, and Lys307. Cys401, Cys404, Cys419, and Cys424 together coordinate Zn(2+). In terms of domain architecture, BRCT spans 586-667; it reads EGHPEFSGKT…FVDKQNELNS (82 aa).

The protein belongs to the NAD-dependent DNA ligase family. LigA subfamily. The cofactor is Mg(2+). Mn(2+) serves as cofactor.

The enzyme catalyses NAD(+) + (deoxyribonucleotide)n-3'-hydroxyl + 5'-phospho-(deoxyribonucleotide)m = (deoxyribonucleotide)n+m + AMP + beta-nicotinamide D-nucleotide.. Functionally, DNA ligase that catalyzes the formation of phosphodiester linkages between 5'-phosphoryl and 3'-hydroxyl groups in double-stranded DNA using NAD as a coenzyme and as the energy source for the reaction. It is essential for DNA replication and repair of damaged DNA. The sequence is that of DNA ligase from Staphylococcus aureus (strain USA300).